Reading from the N-terminus, the 160-residue chain is Cyclic pyranopterin monophosphate synthase (160 aa).

Substrate contacts are provided by residues 76–78 and 114–115; these read LCH and ME. D129 is an active-site residue.

The protein belongs to the MoaC family. In terms of assembly, homohexamer; trimer of dimers.

It carries out the reaction (8S)-3',8-cyclo-7,8-dihydroguanosine 5'-triphosphate = cyclic pyranopterin phosphate + diphosphate. Its pathway is cofactor biosynthesis; molybdopterin biosynthesis. In terms of biological role, catalyzes the conversion of (8S)-3',8-cyclo-7,8-dihydroguanosine 5'-triphosphate to cyclic pyranopterin monophosphate (cPMP). This Vibrio cholerae serotype O1 (strain ATCC 39541 / Classical Ogawa 395 / O395) protein is Cyclic pyranopterin monophosphate synthase.